Consider the following 1020-residue polypeptide: Retinoblastoma-related protein (1020 aa).

2 stretches are compositionally biased toward polar residues: residues 382–391 (SPTKTITSPL) and 398–409 (ASHTNGILGSTN). The disordered stretch occupies residues 382–409 (SPTKTITSPLSPHRSPASHTNGILGSTN). Positions 415 to 616 (TPVSTAMTTA…EKGSSMYNSL (202 aa)) are domain A. A pocket region spans residues 415-869 (TPVSTAMTTA…NEIFIPAAKP (455 aa)). The segment at 617–737 (TVARPSLSAE…PGGGGETCAE (121 aa)) is spacer. The segment at 738–869 (TGINIFFSKI…NEIFIPAAKP (132 aa)) is domain B.

Belongs to the retinoblastoma protein (RB) family.

Its subcellular location is the nucleus. Regulator of biological processes that recruits a histone deacetylase to control gene transcription. May play a role in the entry into mitosis, negatively regulating the cell proliferation. Formation of stable complexes with geminiviridae replication-associated proteins may create a cellular environment which favors viral DNA replication. This chain is Retinoblastoma-related protein (RBR), found in Ricinus communis (Castor bean).